Here is a 328-residue protein sequence, read N- to C-terminus: Naphthalene 1,2-dioxygenase/salicylate 5-hydroxylase systems, ferredoxin--NAD(P)(+), reductase component (328 aa).

The region spanning 1–89 (MELVVEPLNL…DCTIEIPESD (89 aa)) is the 2Fe-2S ferredoxin-type domain. Residues Cys35, Cys40, Cys43, and Cys73 each contribute to the [2Fe-2S] cluster site. The FAD-binding FR-type domain maps to 96 to 193 (ARIVKGTVTA…SGPLGTAYLR (98 aa)).

The protein belongs to the bacterial ring-hydroxylating dioxygenase ferredoxin reductase family. As to quaternary structure, ferredoxin reductase NagAa belongs to both the salicylate 5-hydroxylase (S5H) and the naphthalene 1,2-dioxygenase (NDO) multicomponent enzyme systems. The NDO multicomponent enzyme system is composed of an electron transfer component and a dioxygenase component (iron sulfur protein (ISP)). The electron transfer component is composed of a ferredoxin reductase (NagAa) and a ferredoxin (NagAb), and the dioxygenase component is formed by a large alpha subunit (NagAc) and a small beta subunit (NagAd). The S5H multicomponent enzyme system is composed of an electron transfer component and a monooxygenase component. The electron transfer component is comprised of a ferredoxin reductase (NagAa) and a ferredoxin (NagAb), and the monooxygenase component is formed by a large subunit (NagG) and a small subunit (NagH). It depends on [2Fe-2S] cluster as a cofactor. FAD serves as cofactor.

The enzyme catalyses 2 reduced [2Fe-2S]-[ferredoxin] + NAD(+) + H(+) = 2 oxidized [2Fe-2S]-[ferredoxin] + NADH. It catalyses the reaction 2 reduced [2Fe-2S]-[ferredoxin] + NADP(+) + H(+) = 2 oxidized [2Fe-2S]-[ferredoxin] + NADPH. The protein operates within aromatic compound metabolism; naphthalene degradation. Functionally, component of two multicomponent enzyme systems which are involved in the catabolism of naphthalene. Plays a role as an electron transfer component for both salicylate 5-hydroxylase (S5H) and naphthalene 1,2-dioxygenase (NDO) systems, by transferring electrons from NAD(P)H to the oxygenase component via the ferredoxin NagAb. The electron transport chain from the two systems can use both NADH and NADPH as electron donors at approximately similar rates. The polypeptide is Naphthalene 1,2-dioxygenase/salicylate 5-hydroxylase systems, ferredoxin--NAD(P)(+), reductase component (Ralstonia sp).